The primary structure comprises 460 residues: Alpha-amylase (460 aa).

The N-terminal stretch at 1-21 is a signal peptide; that stretch reads MASRTLSGALALAAAATAVLA. Positions 121, 167, and 176 each coordinate Ca(2+). D206 (nucleophile) is an active-site residue. H210 provides a ligand contact to Ca(2+). The active-site Proton donor is E233.

It belongs to the glycosyl hydrolase 13 family. Monomer. It depends on Ca(2+) as a cofactor.

It carries out the reaction Endohydrolysis of (1-&gt;4)-alpha-D-glucosidic linkages in polysaccharides containing three or more (1-&gt;4)-alpha-linked D-glucose units.. This Streptomyces thermoviolaceus protein is Alpha-amylase (amy).